The primary structure comprises 593 residues: DEAD-box ATP-dependent RNA helicase 18 (593 aa).

Positions 16–44 (FSDLEPPLSGDIIEALNQSDFEFCTPVQA) match the Q motif motif. The 180-residue stretch at 47–226 (IPLLCSYKDV…KAGLRNPVRV (180 aa)) folds into the Helicase ATP-binding domain. Residue 60–67 (AATGSGKT) coordinates ATP. A DEAD box motif is present at residues 174–177 (DEAD). A Helicase C-terminal domain is found at 264–411 (QLVDLLIKNS…ERKCSEDASD (148 aa)). Over residues 506-524 (QRQQNLQVRKEKRQEEKKE) the composition is skewed to basic and acidic residues. Positions 506–561 (QRQQNLQVRKEKRQEEKKEKGKRKRVDASASNDPKKASRKLTGKQRQTIQTAEDEE) are disordered.

This sequence belongs to the DEAD box helicase family. DDX55/SPB4 subfamily.

The catalysed reaction is ATP + H2O = ADP + phosphate + H(+). The polypeptide is DEAD-box ATP-dependent RNA helicase 18 (RH18) (Arabidopsis thaliana (Mouse-ear cress)).